Here is an 87-residue protein sequence, read N- to C-terminus: Large ribosomal subunit protein bL27 (87 aa).

The disordered stretch occupies residues 1–22; it reads MAHKKGQGSVKNGRDSRSKRLG.

Belongs to the bacterial ribosomal protein bL27 family.

The chain is Large ribosomal subunit protein bL27 from Akkermansia muciniphila (strain ATCC BAA-835 / DSM 22959 / JCM 33894 / BCRC 81048 / CCUG 64013 / CIP 107961 / Muc).